The chain runs to 452 residues: Trigger factor (452 aa).

One can recognise a PPIase FKBP-type domain in the interval 171-256 (GDRVTLAFKG…ATLIEAPQDA (86 aa)).

This sequence belongs to the FKBP-type PPIase family. Tig subfamily.

It is found in the cytoplasm. The enzyme catalyses [protein]-peptidylproline (omega=180) = [protein]-peptidylproline (omega=0). In terms of biological role, involved in protein export. Acts as a chaperone by maintaining the newly synthesized protein in an open conformation. Functions as a peptidyl-prolyl cis-trans isomerase. The protein is Trigger factor of Afipia carboxidovorans (strain ATCC 49405 / DSM 1227 / KCTC 32145 / OM5) (Oligotropha carboxidovorans).